The sequence spans 102 residues: UV-induced protein uvi31 (102 aa).

Belongs to the BolA/IbaG family.

The protein resides in the mitochondrion matrix. It localises to the cytoplasm. It is found in the nucleus. Its function is as follows. Acts as a mitochondrial iron-sulfur (Fe-S) cluster assembly factor that facilitates [4Fe-4S] cluster insertion into a subset of mitochondrial proteins such as lipoyl synthase (LS) and succinate dehydrogenase (SDH). Required during the last step of iron-sulfur protein assembly when the iron-sulfur cluster is inserted into the target protein. Probably acts together with the monothiol glutaredoxin grx5. Not required for [2Fe-2S] cluster insertion into mitochondrial proteins. May be involved in control of cell division, especially during the resumption from cell cycle arrest. In Schizosaccharomyces pombe (strain 972 / ATCC 24843) (Fission yeast), this protein is UV-induced protein uvi31.